Consider the following 942-residue polypeptide: Chitin synthase 4 (942 aa).

The segment at 1–124 (MPPRYPFGGG…FDEHDGDVPL (124 aa)) is disordered. Residues 14-26 (DEAHHQPLERRTT) show a composition bias toward basic and acidic residues. Over residues 27–36 (AEAQGNSFTH) the composition is skewed to polar residues. Asparagine 604 is a glycosylation site (N-linked (GlcNAc...) asparagine). A run of 7 helical transmembrane segments spans residues 641 to 661 (TIQL…FFIL), 674 to 694 (VPNL…FLLS), 709 to 729 (AMVV…YLAV), 755 to 775 (IVIS…MFLE), 783 to 803 (IVQY…YAFA), 885 to 905 (VLCW…ISSI), and 909 to 929 (TIYM…RMMG).

It belongs to the chitin synthase family. Class I subfamily.

It localises to the cell membrane. The protein localises to the cytoplasmic vesicle membrane. It carries out the reaction [(1-&gt;4)-N-acetyl-beta-D-glucosaminyl](n) + UDP-N-acetyl-alpha-D-glucosamine = [(1-&gt;4)-N-acetyl-beta-D-glucosaminyl](n+1) + UDP + H(+). Its function is as follows. Polymerizes chitin, a structural polymer of the cell wall and septum, by transferring the sugar moiety of UDP-GlcNAc to the non-reducing end of the growing chitin polymer. The sequence is that of Chitin synthase 4 from Mycosarcoma maydis (Corn smut fungus).